The primary structure comprises 219 residues: Octanoyltransferase (219 aa).

A BPL/LPL catalytic domain is found at E32 to K207. Residues R71–H78, S138–G140, and G151–A153 each bind substrate. The active-site Acyl-thioester intermediate is the C169.

The protein belongs to the LipB family.

The protein localises to the cytoplasm. It carries out the reaction octanoyl-[ACP] + L-lysyl-[protein] = N(6)-octanoyl-L-lysyl-[protein] + holo-[ACP] + H(+). Its pathway is protein modification; protein lipoylation via endogenous pathway; protein N(6)-(lipoyl)lysine from octanoyl-[acyl-carrier-protein]: step 1/2. Catalyzes the transfer of endogenously produced octanoic acid from octanoyl-acyl-carrier-protein onto the lipoyl domains of lipoate-dependent enzymes. Lipoyl-ACP can also act as a substrate although octanoyl-ACP is likely to be the physiological substrate. This Shewanella pealeana (strain ATCC 700345 / ANG-SQ1) protein is Octanoyltransferase.